Consider the following 383-residue polypeptide: L-lactate dehydrogenase (383 aa).

In terms of domain architecture, FMN hydroxy acid dehydrogenase spans 1 to 380 (MIVSSTTDFR…NETILAERVP (380 aa)). Substrate is bound at residue Y24. FMN is bound by residues S106 and Q127. Residue Y129 coordinates substrate. T155 is an FMN binding site. R164 provides a ligand contact to substrate. K251 contributes to the FMN binding site. H275 functions as the Proton acceptor in the catalytic mechanism. Substrate is bound at residue R278. 306–330 (DGGVRSGLDVVRMLALGARGVLIGR) contacts FMN.

The protein belongs to the FMN-dependent alpha-hydroxy acid dehydrogenase family. FMN is required as a cofactor.

It localises to the cell inner membrane. The enzyme catalyses (S)-lactate + A = pyruvate + AH2. Functionally, catalyzes the conversion of L-lactate to pyruvate. Is coupled to the respiratory chain. This Caulobacter vibrioides (strain ATCC 19089 / CIP 103742 / CB 15) (Caulobacter crescentus) protein is L-lactate dehydrogenase.